Here is a 377-residue protein sequence, read N- to C-terminus: RING finger protein 215 (377 aa).

The Cytoplasmic portion of the chain corresponds to Met1–Pro22. Residues Met1 to Pro22 form a disordered region. A compositionally biased stretch (pro residues) spans Arg10–Pro22. Residues Leu23–Ala43 traverse the membrane as a helical segment. Topologically, residues Asp44 to Pro250 are extracellular. Residue Asn186 is glycosylated (N-linked (GlcNAc...) asparagine). A helical membrane pass occupies residues Leu251–Val271. The Cytoplasmic segment spans residues Gln272–Asp377. The RING-type; atypical zinc-finger motif lies at Cys325–Lys366.

The protein resides in the membrane. This Homo sapiens (Human) protein is RING finger protein 215 (RNF215).